The primary structure comprises 61 residues: Large ribosomal subunit protein eL20 (61 aa).

This sequence belongs to the eukaryotic ribosomal protein eL20 family. In terms of assembly, part of the 50S ribosomal subunit. Binds 23S rRNA.

The protein is Large ribosomal subunit protein eL20 of Methanosarcina acetivorans (strain ATCC 35395 / DSM 2834 / JCM 12185 / C2A).